The primary structure comprises 86 residues: ATP synthase epsilon chain (86 aa).

The protein belongs to the ATPase epsilon chain family. As to quaternary structure, F-type ATPases have 2 components, CF(1) - the catalytic core - and CF(0) - the membrane proton channel. CF(1) has five subunits: alpha(3), beta(3), gamma(1), delta(1), epsilon(1). CF(0) has three main subunits: a, b and c.

Its subcellular location is the cell inner membrane. Its function is as follows. Produces ATP from ADP in the presence of a proton gradient across the membrane. The polypeptide is ATP synthase epsilon chain (atpC) (Caulobacter vibrioides (strain ATCC 19089 / CIP 103742 / CB 15) (Caulobacter crescentus)).